The primary structure comprises 167 residues: Envelope glycoprotein L (167 aa).

Residues Met1–Ala20 form the signal peptide. Residues Ser18–Ile131 are interaction with gH. Over residues Arg142 to Lys154 the composition is skewed to polar residues. The segment at Arg142–Lys167 is disordered. The span at Ser155 to Lys167 shows a compositional bias: basic residues.

Belongs to the herpesviridae glycoprotein L family. As to quaternary structure, interacts with glycoprotein H (gH); this interaction is necessary for the correct processing and cell surface expression of gH. The heterodimer gH/gL seems to interact with gB trimers during fusion. When in complex with gH, interacts with host EPHA2; this interaction triggers EPHA2 phosphorylation and endocytosis, allowing virus entry.

The protein localises to the virion membrane. The protein resides in the host cell membrane. Its subcellular location is the host Golgi apparatus. It is found in the host trans-Golgi network. The heterodimer glycoprotein H-glycoprotein L is required for the fusion of viral and plasma membranes leading to virus entry into the host cell. Acts as a functional inhibitor of gH and maintains gH in an inhibited form. Upon binding to host integrins, gL dissociates from gH leading to activation of the viral fusion glycoproteins gB and gH. Targets heparan sulfate proteoglycans of the syndecan family as well as host EPHA2 to promote viral entry. This is Envelope glycoprotein L from Human herpesvirus 8 type P (isolate GK18) (HHV-8).